The following is a 368-amino-acid chain: Hydrophobic dipeptide epimerase (368 aa).

Substrate is bound by residues threonine 143 and 168 to 170; that span reads KIK. The Mg(2+) site is built by aspartate 197, glutamate 225, and aspartate 253. Substrate-binding positions include lysine 277 and 329-331; that span reads DMD.

It belongs to the mandelate racemase/muconate lactonizing enzyme family. Mg(2+) is required as a cofactor.

Catalyzes the epimerization of various hydrophobic dipeptides, such as L-Ala-L-Phe. Has epimerase activity with L-Ala-L-Thr, L-Ala-L-Met, L-Ala-L-Tyr, as well as L-Phe-L-Met, L-Phe-L-Ser and L-Phe-L-Thr (in vitro). The protein is Hydrophobic dipeptide epimerase of Citrifermentans bemidjiense (strain ATCC BAA-1014 / DSM 16622 / JCM 12645 / Bem) (Geobacter bemidjiensis).